We begin with the raw amino-acid sequence, 601 residues long: Probable translation initiation factor IF-2 (601 aa).

The tr-type G domain occupies 10 to 227; sequence LRAPIVVVLG…VLAGLAQRYL (218 aa). The G1 stretch occupies residues 19 to 26; sequence GHVDAGKT. 19-26 contacts GTP; the sequence is GHVDAGKT. The segment at 44–48 is G2; it reads TMTQH. Positions 83–86 are G3; sequence DTPG. GTP contacts are provided by residues 83-87 and 137-140; these read DTPGH and NKID. Residues 137–140 are G4; the sequence is NKID. The interval 205 to 207 is G5; sequence SAV.

Belongs to the TRAFAC class translation factor GTPase superfamily. Classic translation factor GTPase family. IF-2 subfamily.

Functionally, function in general translation initiation by promoting the binding of the formylmethionine-tRNA to ribosomes. Seems to function along with eIF-2. The polypeptide is Probable translation initiation factor IF-2 (Thermofilum pendens (strain DSM 2475 / Hrk 5)).